The primary structure comprises 142 residues: Photosystem II extrinsic protein U (142 aa).

Residues 1–28 (MKKIGLLLTIFSLCLGCLGLVPSDKAHA) form the signal peptide.

It belongs to the PsbU family. As to quaternary structure, PSII is composed of 1 copy each of membrane proteins PsbA, PsbB, PsbC, PsbD, PsbE, PsbF, PsbH, PsbI, PsbJ, PsbK, PsbL, PsbM, PsbT, PsbX, PsbY, PsbZ, Psb30/Ycf12, peripheral proteins PsbO, CyanoQ (PsbQ), PsbU, PsbV and a large number of cofactors. It forms dimeric complexes.

It is found in the cellular thylakoid membrane. One of the extrinsic, lumenal subunits of photosystem II (PSII). PSII is a light-driven water plastoquinone oxidoreductase, using light energy to abstract electrons from H(2)O, generating a proton gradient subsequently used for ATP formation. The extrinsic proteins stabilize the structure of photosystem II oxygen-evolving complex (OEC), the ion environment of oxygen evolution and protect the OEC against heat-induced inactivation. The sequence is that of Photosystem II extrinsic protein U from Trichodesmium erythraeum (strain IMS101).